We begin with the raw amino-acid sequence, 536 residues long: Phosphoenolpyruvate carboxykinase (ATP) (536 aa).

3 residues coordinate substrate: R62, Y203, and K209. ATP is bound by residues K209, H228, and 244 to 252 (GLSGTGKTT). Mn(2+)-binding residues include K209 and H228. D265 lines the Mn(2+) pocket. Residues E293, R329, 445 to 446 (RI), and T451 contribute to the ATP site. R329 provides a ligand contact to substrate.

This sequence belongs to the phosphoenolpyruvate carboxykinase (ATP) family. As to quaternary structure, monomer. Mn(2+) is required as a cofactor.

Its subcellular location is the cytoplasm. It catalyses the reaction oxaloacetate + ATP = phosphoenolpyruvate + ADP + CO2. The protein operates within carbohydrate biosynthesis; gluconeogenesis. Involved in the gluconeogenesis. Catalyzes the conversion of oxaloacetate (OAA) to phosphoenolpyruvate (PEP) through direct phosphoryl transfer between the nucleoside triphosphate and OAA. The chain is Phosphoenolpyruvate carboxykinase (ATP) from Actinobacillus pleuropneumoniae serotype 7 (strain AP76).